Consider the following 151-residue polypeptide: Small ribosomal subunit protein uS15 (151 aa).

The disordered stretch occupies residues 1 to 20 (MGRMHSNGKGISGSSLPYNR).

This sequence belongs to the universal ribosomal protein uS15 family. As to quaternary structure, component of the small ribosomal subunit. Part of the small subunit (SSU) processome, composed of more than 70 proteins and the RNA chaperone small nucleolar RNA (snoRNA) U3.

The protein resides in the cytoplasm. The protein localises to the nucleus. Its subcellular location is the nucleolus. Component of the small ribosomal subunit. The ribosome is a large ribonucleoprotein complex responsible for the synthesis of proteins in the cell. Part of the small subunit (SSU) processome, first precursor of the small eukaryotic ribosomal subunit. During the assembly of the SSU processome in the nucleolus, many ribosome biogenesis factors, an RNA chaperone and ribosomal proteins associate with the nascent pre-rRNA and work in concert to generate RNA folding, modifications, rearrangements and cleavage as well as targeted degradation of pre-ribosomal RNA by the RNA exosome. The chain is Small ribosomal subunit protein uS15 (rps13) from Dictyostelium discoideum (Social amoeba).